The primary structure comprises 263 residues: S-acyl fatty acid synthase thioesterase, medium chain (263 aa).

Methionine 1 is modified (N-acetylmethionine). Residues serine 101 and histidine 237 contribute to the active site. Positions 262–263 (LT) are important for interaction with FASN.

This sequence belongs to the thioesterase family. In terms of assembly, interacts (via C-terminus) with FASN.

The protein localises to the cytoplasm. It localises to the cytosol. The catalysed reaction is (9Z)-octadecenoyl-[ACP] + H2O = (9Z)-octadecenoate + holo-[ACP] + H(+). It carries out the reaction decanoyl-CoA + H2O = decanoate + CoA + H(+). It catalyses the reaction dodecanoyl-CoA + H2O = dodecanoate + CoA + H(+). The enzyme catalyses tetradecanoyl-CoA + H2O = tetradecanoate + CoA + H(+). The catalysed reaction is hexadecanoyl-CoA + H2O = hexadecanoate + CoA + H(+). In terms of biological role, contributes to the release of free fatty acids from fatty acid synthase (FASN). Has broad substrate specificity, giving rise to a range of free fatty acids with chain lengths between 10 and 16 carbon atoms (C10 - C16). This is S-acyl fatty acid synthase thioesterase, medium chain from Rattus norvegicus (Rat).